We begin with the raw amino-acid sequence, 354 residues long: UPF0283 membrane protein CGSHiGG_02710 (354 aa).

3 consecutive transmembrane segments (helical) span residues 57 to 77, 87 to 107, and 211 to 231; these read LLKFTALLFGLATVAQSVQWI, IYLAFALVSLIIILLGIKEII, and ESAVIVAISPLAVVDMFFIAW.

It belongs to the UPF0283 family.

The protein localises to the cell inner membrane. In Haemophilus influenzae (strain PittGG), this protein is UPF0283 membrane protein CGSHiGG_02710.